Consider the following 108-residue polypeptide: MTVRLGQIMHVNPNYYDEYEKRHSDLPVKFPEMKKALKEAGAHNYSIYLDKKTGTLFAYLEVDDMDKYKAIAEMDACKEWWAYMAPLMDTNPDKSPVTFDLPEVFHLD.

Substrate is bound at residue Tyr19. His23 (proton donor) is an active-site residue. Substrate is bound by residues Tyr45 and 80 to 81; that span reads WW.

Belongs to the rhamnose mutarotase family. In terms of assembly, homodimer.

Its subcellular location is the cytoplasm. It carries out the reaction alpha-L-rhamnose = beta-L-rhamnose. Its pathway is carbohydrate metabolism; L-rhamnose metabolism. In terms of biological role, involved in the anomeric conversion of L-rhamnose. This chain is L-rhamnose mutarotase, found in Ligilactobacillus salivarius (strain UCC118) (Lactobacillus salivarius).